The following is a 409-amino-acid chain: UDP-N-acetylglucosamine--N-acetylmuramyl-(pentapeptide) pyrophosphoryl-undecaprenol N-acetylglucosamine transferase (409 aa).

UDP-N-acetyl-alpha-D-glucosamine-binding positions include 11–13, Asn-125, Arg-169, Ser-199, and Gln-299; that span reads TGG.

It belongs to the glycosyltransferase 28 family. MurG subfamily.

The protein resides in the cell membrane. It catalyses the reaction di-trans,octa-cis-undecaprenyl diphospho-N-acetyl-alpha-D-muramoyl-L-alanyl-D-glutamyl-meso-2,6-diaminopimeloyl-D-alanyl-D-alanine + UDP-N-acetyl-alpha-D-glucosamine = di-trans,octa-cis-undecaprenyl diphospho-[N-acetyl-alpha-D-glucosaminyl-(1-&gt;4)]-N-acetyl-alpha-D-muramoyl-L-alanyl-D-glutamyl-meso-2,6-diaminopimeloyl-D-alanyl-D-alanine + UDP + H(+). It functions in the pathway cell wall biogenesis; peptidoglycan biosynthesis. In terms of biological role, cell wall formation. Catalyzes the transfer of a GlcNAc subunit on undecaprenyl-pyrophosphoryl-MurNAc-pentapeptide (lipid intermediate I) to form undecaprenyl-pyrophosphoryl-MurNAc-(pentapeptide)GlcNAc (lipid intermediate II). This Clostridioides difficile (strain 630) (Peptoclostridium difficile) protein is UDP-N-acetylglucosamine--N-acetylmuramyl-(pentapeptide) pyrophosphoryl-undecaprenol N-acetylglucosamine transferase.